We begin with the raw amino-acid sequence, 294 residues long: Release factor glutamine methyltransferase (294 aa).

S-adenosyl-L-methionine-binding positions include 131–135, Asp154, and Asn202; that span reads GTGSG. 202–205 provides a ligand contact to substrate; the sequence is NPPY.

The protein belongs to the protein N5-glutamine methyltransferase family. PrmC subfamily.

It carries out the reaction L-glutaminyl-[peptide chain release factor] + S-adenosyl-L-methionine = N(5)-methyl-L-glutaminyl-[peptide chain release factor] + S-adenosyl-L-homocysteine + H(+). Functionally, methylates the class 1 translation termination release factors RF1/PrfA and RF2/PrfB on the glutamine residue of the universally conserved GGQ motif. This is Release factor glutamine methyltransferase from Chlorobaculum tepidum (strain ATCC 49652 / DSM 12025 / NBRC 103806 / TLS) (Chlorobium tepidum).